We begin with the raw amino-acid sequence, 172 residues long: Small ribosomal subunit protein uS5 (172 aa).

The 64-residue stretch at 15-78 (LNDKLIFINR…ANAKRNLSRI (64 aa)) folds into the S5 DRBM domain.

This sequence belongs to the universal ribosomal protein uS5 family. As to quaternary structure, part of the 30S ribosomal subunit. Contacts proteins S4 and S8.

Functionally, with S4 and S12 plays an important role in translational accuracy. Located at the back of the 30S subunit body where it stabilizes the conformation of the head with respect to the body. This Dehalococcoides mccartyi (strain CBDB1) protein is Small ribosomal subunit protein uS5.